The chain runs to 556 residues: General transcription factor IIF subunit 1 (556 aa).

Disordered regions lie at residues 82-128 and 226-499; these read TMTS…PAAA and SRLQ…PFTE. A compositionally biased stretch (low complexity) spans 84 to 128; that stretch reads TSAPNGTNSTGTTPNTTTTTTTTTTTTTTTTTAAGTPGAPNPAAA. A compositionally biased stretch (basic and acidic residues) spans 245-275; sequence SGKKSIEELEEAEHRNRNEDPNRYKTTNEEK. Composition is skewed to acidic residues over residues 291–338 and 378–394; these read GNGE…DVDL and GDDE…DQDD. Composition is skewed to basic and acidic residues over residues 415–427 and 450–461; these read VKKE…DSKS and NKSDSSVDNRES. The span at 469 to 492 shows a compositional bias: low complexity; the sequence is SSPQAVQPNSPSQQQQQQQQNIDP.

This sequence belongs to the TFIIF alpha subunit family. In terms of assembly, heterodimer of an alpha and a beta subunit.

It localises to the nucleus. Its function is as follows. TFIIF is a general transcription initiation factor that binds to RNA polymerase II and helps to recruit it to the initiation complex in collaboration with TFIIB. It promotes transcription elongation. This Dictyostelium discoideum (Social amoeba) protein is General transcription factor IIF subunit 1 (gtf2f1).